The sequence spans 188 residues: NANOG neighbor homeobox (188 aa).

Residues 28–106 (ETILANKKQS…NEKQKQYPEK (79 aa)) are disordered. The span at 57–106 (QNGKQKWREEGEAGRKREREKEEKNEKELQDEQENKRKRENEKQKQYPEK) shows a compositional bias: basic and acidic residues. A DNA-binding region (homeobox) is located at residues 102–161 (QYPEKRLVSKSLMHTLWAKFKLNRCPTIQESLSLSFEFDMTHKQISQWFCKTRKKYNKEM).

The protein resides in the nucleus. This Homo sapiens (Human) protein is NANOG neighbor homeobox (NANOGNB).